The sequence spans 247 residues: Protein lin-28 homolog B (247 aa).

The disordered stretch occupies residues 1–22; it reads MAEGGASKGEEPEKLPGLAEDE. One can recognise a CSD domain in the interval 27-100; sequence HGTGHCKWFN…GLESIRVTGP (74 aa). A phosphoserine mark is found at S94, S103, and S108. Positions 96–124 are disordered; sequence RVTGPGGSPCLGSERRPKGKTLQKRKPKG. Residues 112–123 show a composition bias toward basic residues; sequence PKGKTLQKRKPK. 2 consecutive CCHC-type zinc fingers follow at residues 125-142 and 147-164; these read DRCY…ECSL and KKCH…NCPH. Zn(2+)-binding residues include C127, C130, H135, C140, C149, C152, H157, and C162. Residues 173–186 show a composition bias toward polar residues; sequence SSQGRQEAESQPCS. Residues 173–247 are disordered; that stretch reads SSQGRQEAES…GPLIQKRKKT (75 aa). A compositionally biased stretch (basic and acidic residues) spans 207–219; sequence VKSEMAEHSDRSP.

Belongs to the lin-28 family.

It localises to the nucleus. It is found in the nucleolus. Functionally, suppressor of microRNA (miRNA) biogenesis, including that of let-7 and possibly of miR107, miR-143 and miR-200c. Binds primary let-7 transcripts (pri-let-7), including pri-let-7g and pri-let-7a-1, and sequester them in the nucleolus, away from the microprocessor complex, hence preventing their processing into mature miRNA. Does not act on pri-miR21. The repression of let-7 expression is required for normal development and contributes to maintain the pluripotent state of embryonic stem cells by preventing let-7-mediated differentiation. When overexpressed, recruits ZCCHC11/TUT4 uridylyltransferase to pre-let-7 transcripts, leading to their terminal uridylation and degradation. This activity might not be relevant in vivo, as LIN28B-mediated inhibition of let-7 miRNA maturation appears to be ZCCHC11-independent. Interaction with target pre-miRNAs occurs via an 5'-GGAG-3' motif in the pre-miRNA terminal loop. Mediates MYC-induced let-7 repression. When overexpressed, may stimulate growth of carcinoma cell lines. This Mus musculus (Mouse) protein is Protein lin-28 homolog B (Lin28b).